A 375-amino-acid chain; its full sequence is Succinyl-diaminopimelate desuccinylase (375 aa).

Residue His66 participates in Zn(2+) binding. Asp68 is a catalytic residue. Position 99 (Asp99) interacts with Zn(2+). The Proton acceptor role is filled by Glu133. 3 residues coordinate Zn(2+): Glu134, Glu162, and His348.

Belongs to the peptidase M20A family. DapE subfamily. Homodimer. Zn(2+) is required as a cofactor. Co(2+) serves as cofactor.

It carries out the reaction N-succinyl-(2S,6S)-2,6-diaminopimelate + H2O = (2S,6S)-2,6-diaminopimelate + succinate. It functions in the pathway amino-acid biosynthesis; L-lysine biosynthesis via DAP pathway; LL-2,6-diaminopimelate from (S)-tetrahydrodipicolinate (succinylase route): step 3/3. In terms of biological role, catalyzes the hydrolysis of N-succinyl-L,L-diaminopimelic acid (SDAP), forming succinate and LL-2,6-diaminopimelate (DAP), an intermediate involved in the bacterial biosynthesis of lysine and meso-diaminopimelic acid, an essential component of bacterial cell walls. The chain is Succinyl-diaminopimelate desuccinylase from Escherichia coli O1:K1 / APEC.